The sequence spans 414 residues: Esterase FrsA (414 aa).

It belongs to the FrsA family.

It catalyses the reaction a carboxylic ester + H2O = an alcohol + a carboxylate + H(+). Catalyzes the hydrolysis of esters. The chain is Esterase FrsA from Klebsiella pneumoniae subsp. pneumoniae (strain ATCC 700721 / MGH 78578).